Reading from the N-terminus, the 553-residue chain is Heterochromatin protein 1-binding protein 3 (553 aa).

Position 2 is an N-acetylalanine (Ala-2). A Phosphoserine modification is found at Ser-6. 2 disordered regions span residues 29-134 (KLGE…KTIP) and 140-159 (SASQ…SPRP). Thr-51 is modified (phosphothreonine). Residues 60–71 (GEEEKPEPDISS) are compositionally biased toward acidic residues. A Glycyl lysine isopeptide (Lys-Gly) (interchain with G-Cter in SUMO2) cross-link involves residue Lys-64. Phosphothreonine is present on Thr-85. A compositionally biased stretch (basic and acidic residues) spans 94–127 (EQPKGEPENEEKEENKSSEETKKDEKDQSKEKEK). Lys-97 participates in a covalent cross-link: Glycyl lysine isopeptide (Lys-Gly) (interchain with G-Cter in SUMO2). The segment covering 140 to 154 (SASQLARAQKQTPMA) has biased composition (polar residues). A phosphoserine mark is found at Ser-142, Ser-155, and Ser-156. Residues 157 to 232 (PRPKMDAILT…GASGSFVVVQ (76 aa)) form the H15 1 domain. Lys-190 is modified (N6-acetyllysine). The segment at 230–255 (VVQKSRKTPQKSRNRKNRSSAVDPEP) is disordered. Residues 233–247 (KSRKTPQKSRNRKNR) show a composition bias toward basic residues. Ser-248 and Ser-249 each carry phosphoserine. A PxVxL motif motif is present at residues 255–259 (PQVKL). 2 consecutive H15 domains span residues 255 to 330 (PQVK…QLKK) and 337 to 413 (LGGS…QLCF). Lys-258 is covalently cross-linked (Glycyl lysine isopeptide (Lys-Gly) (interchain with G-Cter in SUMO2)). The interval 422–553 (LFPKKEPDDS…TMKKSFRVKK (132 aa)) is disordered. The segment covering 430–450 (DSRDEDEDEDESSEEDSEDEE) has biased composition (acidic residues). Phosphoserine occurs at positions 441, 442, and 446. Residues 489 to 510 (GKARPLPKKAPPKAKTPAKKTR) show a composition bias toward basic residues. A compositionally biased stretch (low complexity) spans 517–527 (KKPSGGSSKKP). A compositionally biased stretch (basic residues) spans 543 to 553 (STMKKSFRVKK).

As to quaternary structure, interacts (via PxVxL motif) with CBX5 (via Trp-174).

The protein localises to the nucleus. The protein resides in the chromosome. In terms of biological role, component of heterochromatin that maintains heterochromatin integrity during G1/S progression and regulates the duration of G1 phase to critically influence cell proliferative capacity. Mediates chromatin condensation during hypoxia, leading to increased tumor cell viability, radio-resistance, chemo-resistance and self-renewal. The protein is Heterochromatin protein 1-binding protein 3 (HP1BP3) of Homo sapiens (Human).